The primary structure comprises 502 residues: Probable cytosol aminopeptidase (502 aa).

Mn(2+) contacts are provided by Lys-269 and Asp-274. Lys-281 is a catalytic residue. Positions 292, 351, and 353 each coordinate Mn(2+). Arg-355 is a catalytic residue.

This sequence belongs to the peptidase M17 family. The cofactor is Mn(2+).

Its subcellular location is the cytoplasm. It catalyses the reaction Release of an N-terminal amino acid, Xaa-|-Yaa-, in which Xaa is preferably Leu, but may be other amino acids including Pro although not Arg or Lys, and Yaa may be Pro. Amino acid amides and methyl esters are also readily hydrolyzed, but rates on arylamides are exceedingly low.. The catalysed reaction is Release of an N-terminal amino acid, preferentially leucine, but not glutamic or aspartic acids.. Its function is as follows. Presumably involved in the processing and regular turnover of intracellular proteins. Catalyzes the removal of unsubstituted N-terminal amino acids from various peptides. The sequence is that of Probable cytosol aminopeptidase from Shewanella piezotolerans (strain WP3 / JCM 13877).